The chain runs to 247 residues: Thioredoxin reductase-like selenoprotein T homolog selt-1.1 (247 aa).

The N-terminal stretch at 1–26 (MSRFGVFIIGVLFFMSVCDVLRTVSA) is a signal peptide. Residues Cys92 and Cys95 are joined by a disulfide bond.

It belongs to the SelWTH family. SELT subfamily. As to expression, broadly expressed in neurons of nervous system including ADL, ASH, ASI, ASJ, ASK and AWB amphid sensilla neurons, in epithelial cells including hypodermal, arcade, pharyngeal, vulval and rectal cells, and in somatic muscle cells of the head, neck and body wall, and non-striated pharyngeal muscles.

The protein resides in the endoplasmic reticulum. It carries out the reaction [thioredoxin]-dithiol + NADP(+) = [thioredoxin]-disulfide + NADPH + H(+). Probably has thioredoxin reductase-like oxidoreductase activity. Plays a role in regulating the oxidative stress response, and odorant and pathogenic bacteria avoidance behavior. The sequence is that of Thioredoxin reductase-like selenoprotein T homolog selt-1.1 from Caenorhabditis elegans.